We begin with the raw amino-acid sequence, 339 residues long: Purple acid phosphatase 4 (339 aa).

The first 31 residues, 1 to 31 (MSSKFDIGSLSIVMTLLICFLLLSLAPKLEA), serve as a signal peptide directing secretion. Aspartate 53 is a Fe cation binding site. Asparagine 61 carries N-linked (GlcNAc...) asparagine glycosylation. Fe cation-binding residues include aspartate 86 and tyrosine 89. Aspartate 86 is a binding site for Zn(2+). Zn(2+) is bound by residues asparagine 124 and histidine 218. Catalysis depends on histidine 227, which acts as the Proton donor. Residue histidine 253 coordinates Zn(2+). 253–255 (HDH) is a substrate binding site. Histidine 255 serves as a coordination point for Fe cation. N-linked (GlcNAc...) asparagine glycosylation occurs at asparagine 284.

The protein belongs to the metallophosphoesterase superfamily. Purple acid phosphatase family. As to quaternary structure, homodimer. Requires Fe cation as cofactor. Zn(2+) serves as cofactor. As to expression, expressed in roots, stems, leaves, flowers and siliques.

Its subcellular location is the secreted. It catalyses the reaction a phosphate monoester + H2O = an alcohol + phosphate. The chain is Purple acid phosphatase 4 (PAP4) from Arabidopsis thaliana (Mouse-ear cress).